The chain runs to 119 residues: MSSRPGVDQRFLDAYRLRKTDEYSSVFAFRRAFKGRFFIAHYRPNELGTARLGVVIAKKLAKRANVRNLLKRIVREQFRKARPALAHHDLVVRLHVPVKMATRAMINDDVVNLLGRFRE.

It belongs to the RnpA family. Consists of a catalytic RNA component (M1 or rnpB) and a protein subunit.

It catalyses the reaction Endonucleolytic cleavage of RNA, removing 5'-extranucleotides from tRNA precursor.. RNaseP catalyzes the removal of the 5'-leader sequence from pre-tRNA to produce the mature 5'-terminus. It can also cleave other RNA substrates such as 4.5S RNA. The protein component plays an auxiliary but essential role in vivo by binding to the 5'-leader sequence and broadening the substrate specificity of the ribozyme. This chain is Ribonuclease P protein component, found in Aromatoleum aromaticum (strain DSM 19018 / LMG 30748 / EbN1) (Azoarcus sp. (strain EbN1)).